The chain runs to 234 residues: Nuclear transcription factor Y subunit B-6 (234 aa).

Disordered regions lie at residues 1–21 and 35–55; these read MERG…TPSP and MRPP…EECT. Residues 63 to 69 mediate DNA binding; sequence MPIANVI. The tract at residues 90 to 101 is subunit association domain (SAD); that stretch reads IQECVSEYISFI. The disordered stretch occupies residues 206 to 234; it reads NEPNSKMSGSSSGASGARVEVFPTQQHKY. Over residues 213–222 the composition is skewed to low complexity; the sequence is SGSSSGASGA.

Belongs to the NFYB/HAP3 subunit family. As to quaternary structure, heterotrimeric transcription factor composed of three components, NF-YA, NF-YB and NF-YC. NF-YB and NF-YC must interact and dimerize for NF-YA association and DNA binding. Interacts with PRN1. Binds directly with DPB3-1. As to expression, expressed in roots, flowers and developing siliques. Present in etiolated seedlings.

The protein resides in the nucleus. Its function is as follows. Component of the NF-Y/HAP transcription factor complex. The NF-Y complex stimulates the transcription of various genes by recognizing and binding to a CCAAT motif in promoters. Plays a role in the regulation of the embryogenesis. Involved in the abscisic acid (ABA) signaling pathway. This is Nuclear transcription factor Y subunit B-6 from Arabidopsis thaliana (Mouse-ear cress).